Reading from the N-terminus, the 58-residue chain is U8-ctenitoxin-Pr1a (58 aa).

5 cysteine pairs are disulfide-bonded: Cys2-Cys16, Cys9-Cys22, Cys15-Cys40, Cys24-Cys38, and Cys48-Cys55.

As to expression, expressed by the venom gland.

It is found in the secreted. No toxic effects on mice at dose levels of 5 ug per mouse. May be toxic to insects. The sequence is that of U8-ctenitoxin-Pr1a from Phoneutria reidyi (Brazilian Amazonian armed spider).